The primary structure comprises 186 residues: ATP-dependent protease subunit HslV (186 aa).

Threonine 14 is an active-site residue. Na(+) is bound by residues alanine 168, cysteine 171, and threonine 174.

This sequence belongs to the peptidase T1B family. HslV subfamily. In terms of assembly, a double ring-shaped homohexamer of HslV is capped on each side by a ring-shaped HslU homohexamer. The assembly of the HslU/HslV complex is dependent on binding of ATP.

The protein localises to the cytoplasm. The catalysed reaction is ATP-dependent cleavage of peptide bonds with broad specificity.. Its activity is regulated as follows. Allosterically activated by HslU binding. Its function is as follows. Protease subunit of a proteasome-like degradation complex believed to be a general protein degrading machinery. In Bradyrhizobium sp. (strain ORS 278), this protein is ATP-dependent protease subunit HslV.